The sequence spans 72 residues: ATP synthase subunit c (72 aa).

2 helical membrane passes run 1–21 and 48–68; these read MSLG…GAGI and MFIG…FSFI.

It belongs to the ATPase C chain family. In terms of assembly, F-type ATPases have 2 components, F(1) - the catalytic core - and F(0) - the membrane proton channel. F(1) has five subunits: alpha(3), beta(3), gamma(1), delta(1), epsilon(1). F(0) has three main subunits: a(1), b(2) and c(10-14). The alpha and beta chains form an alternating ring which encloses part of the gamma chain. F(1) is attached to F(0) by a central stalk formed by the gamma and epsilon chains, while a peripheral stalk is formed by the delta and b chains.

The protein resides in the cell membrane. In terms of biological role, f(1)F(0) ATP synthase produces ATP from ADP in the presence of a proton or sodium gradient. F-type ATPases consist of two structural domains, F(1) containing the extramembraneous catalytic core and F(0) containing the membrane proton channel, linked together by a central stalk and a peripheral stalk. During catalysis, ATP synthesis in the catalytic domain of F(1) is coupled via a rotary mechanism of the central stalk subunits to proton translocation. Key component of the F(0) channel; it plays a direct role in translocation across the membrane. A homomeric c-ring of between 10-14 subunits forms the central stalk rotor element with the F(1) delta and epsilon subunits. This chain is ATP synthase subunit c, found in Geobacillus stearothermophilus (Bacillus stearothermophilus).